A 155-amino-acid polypeptide reads, in one-letter code: Large ribosomal subunit protein uL16m (155 aa).

This sequence belongs to the universal ribosomal protein uL16 family.

It is found in the mitochondrion. The protein is Large ribosomal subunit protein uL16m (RPL16) of Petunia hybrida (Petunia).